The chain runs to 245 residues: AP-1-like transcription factor YAP5 (245 aa).

Basic residues predominate over residues 34-47; the sequence is LPHRAAQRRKRVHR. Residues 34–77 are disordered; it reads LPHRAAQRRKRVHRLHEDYETEENDEELQKKKRQNRDAQRAYRE. The bZIP domain occupies 58-121; the sequence is DEELQKKKRQ…QAKESENHAL (64 aa). The tract at residues 63–82 is basic motif; the sequence is KKKRQNRDAQRAYRERKNNK. Residues 68–77 show a composition bias toward basic and acidic residues; it reads NRDAQRAYRE. Residues 86-114 form a leucine-zipper region; that stretch reads LEETIESLSKVVKNYETKLNRLQNELQAK.

It belongs to the bZIP family. YAP subfamily. As to quaternary structure, homodimer.

It is found in the cytoplasm. It localises to the nucleus. In terms of biological role, transcription activator involved in the regulation of genes expressed in response to environmental changes and metabolic requirements. According to genome-wide promoter binding and gene expression studies it is a coregulator for the expression of ribosomal genes, while its own expression is induced by the cell cycle specific activator SBF (SWI4-SWI6). This Saccharomyces cerevisiae (strain ATCC 204508 / S288c) (Baker's yeast) protein is AP-1-like transcription factor YAP5 (YAP5).